Here is a 301-residue protein sequence, read N- to C-terminus: N-acetylmuramic acid 6-phosphate etherase (301 aa).

The SIS domain occupies Ile55–Lys215. The active-site Proton donor is Glu83. The active site involves Glu111.

This sequence belongs to the GCKR-like family. MurNAc-6-P etherase subfamily. In terms of assembly, homodimer.

The catalysed reaction is N-acetyl-D-muramate 6-phosphate + H2O = N-acetyl-D-glucosamine 6-phosphate + (R)-lactate. Its pathway is amino-sugar metabolism; 1,6-anhydro-N-acetylmuramate degradation. It participates in amino-sugar metabolism; N-acetylmuramate degradation. It functions in the pathway cell wall biogenesis; peptidoglycan recycling. Functionally, specifically catalyzes the cleavage of the D-lactyl ether substituent of MurNAc 6-phosphate, producing GlcNAc 6-phosphate and D-lactate. Together with AnmK, is also required for the utilization of anhydro-N-acetylmuramic acid (anhMurNAc) either imported from the medium or derived from its own cell wall murein, and thus plays a role in cell wall recycling. The sequence is that of N-acetylmuramic acid 6-phosphate etherase from Burkholderia lata (strain ATCC 17760 / DSM 23089 / LMG 22485 / NCIMB 9086 / R18194 / 383).